A 214-amino-acid polypeptide reads, in one-letter code: Melanoregulin (214 aa).

The Cholesterol-binding sequence motif motif lies at 162-172 (LSERYLFVVDR). S213 bears the Phosphoserine mark.

This sequence belongs to the melanoregulin family. As to quaternary structure, identified in a complex with RILP and DCTN1; interacts directly with RILP, but does not interact directly with DCTN1. Interacts with PRPH2. Palmitoylated. Palmitoylation is required to maintain the protein at the melanosome membrane. Expressed in photoreceptor cells (at protein level).

It is found in the apical cell membrane. Its subcellular location is the melanosome membrane. The protein localises to the lysosome membrane. It localises to the cytoplasmic vesicle membrane. Probably functions as a cargo-recognition protein that couples cytoplasmic vesicles to the transport machinery. Plays a role in hair pigmentation, a process that involves shedding of melanosome-containing vesicles from melanocytes, followed by phagocytosis of the melanosome-containing vesicles by keratinocytes. Functions on melanosomes as receptor for RILP and the complex formed by RILP and DCTN1, and thereby contributes to retrograde melanosome transport from the cell periphery to the center. Overexpression causes accumulation of late endosomes and/or lysosomes at the microtubule organising center (MTOC) at the center of the cell. Probably binds cholesterol and requires the presence of cholesterol in membranes to function in microtubule-mediated retrograde organelle transport. Binds phosphatidylinositol 3-phosphate, phosphatidylinositol 4-phosphate, phosphatidylinositol 5-phosphate and phosphatidylinositol 3,5-bisphosphate, but not phosphatidylinositol 3,4-bisphosphate or phosphatidylinositol 4,5-bisphosphate. Required for normal phagosome clearing and normal activation of lysosomal enzymes in lysosomes from retinal pigment epithelium cells. Required for normal degradation of the lipofuscin component N-retinylidene-N-retinylethanolamine (A2E) in the eye. May function in membrane fusion and regulate the biogenesis of disk membranes of photoreceptor rod cells. The protein is Melanoregulin (MREG) of Homo sapiens (Human).